The following is a 44-amino-acid chain: Endochitinase 1 (44 aa).

Belongs to the glycosyl hydrolase 19 family. Chitinase class I subfamily.

It carries out the reaction Random endo-hydrolysis of N-acetyl-beta-D-glucosaminide (1-&gt;4)-beta-linkages in chitin and chitodextrins.. In terms of biological role, defense against chitin-containing fungal pathogens. The sequence is that of Endochitinase 1 from Capsicum chinense (Scotch bonnet).